A 513-amino-acid chain; its full sequence is E3 ubiquitin-protein ligase XBAT33 (513 aa).

ANK repeat units follow at residues 44–73, 77–106, 111–140, 171–200, and 214–244; these read GLNSPLHFAAAKGHNEIVGLLLENGADVNS, CGQTALMQACRYGHWEVVQTLLLFRCNVTR, AGRTALHFAAVNGHARCIRLVLADFLPSDK, GGITALHMAALNGLFDCVQLLLDLEANVSA, and AGSTPLHYAACGGNLKCCQILLARGARKMTL. An RING-type zinc finger spans residues 312 to 362; that stretch reads CAVCLERTCTVAAEGCEHQLCVRCALYLCSSSNVPSVTVGPPGSIPCPLCR. Disordered regions lie at residues 397–417 and 455–483; these read DTTDQSSPTCPPTEQRSSKTR and HGTERHSEEHVESSPSRTTTEQEKIEEGQ. 2 stretches are compositionally biased toward basic and acidic residues: residues 455-466 and 474-483; these read HGTERHSEEHVE and TEQEKIEEGQ.

The catalysed reaction is S-ubiquitinyl-[E2 ubiquitin-conjugating enzyme]-L-cysteine + [acceptor protein]-L-lysine = [E2 ubiquitin-conjugating enzyme]-L-cysteine + N(6)-ubiquitinyl-[acceptor protein]-L-lysine.. It functions in the pathway protein modification; protein ubiquitination. Possesses E3 ubiquitin-protein ligase activity when associated with the E2 enzyme UBC8 in vitro. This chain is E3 ubiquitin-protein ligase XBAT33 (XBAT33), found in Arabidopsis thaliana (Mouse-ear cress).